Reading from the N-terminus, the 144-residue chain is Large ribosomal subunit protein uL15 (144 aa).

The tract at residues 1 to 60 is disordered; it reads MRLNSLRPAAGSRPDANRVGRGAGTGNGKTAGRGHKGQHSRSGGFTKVGFEGGQMPLQRR. The segment covering 21–31 has biased composition (gly residues); the sequence is RGAGTGNGKTA.

Belongs to the universal ribosomal protein uL15 family. In terms of assembly, part of the 50S ribosomal subunit.

Its function is as follows. Binds to the 23S rRNA. The sequence is that of Large ribosomal subunit protein uL15 from Alkalilimnicola ehrlichii (strain ATCC BAA-1101 / DSM 17681 / MLHE-1).